Here is a 30-residue protein sequence, read N- to C-terminus: Nattererin-2 (30 aa).

In terms of tissue distribution, expressed by the skin glands.

It is found in the secreted. Functionally, probably has antibacterial activity. The sequence is that of Nattererin-2 from Physalaemus nattereri (Cuyaba dwarf frog).